The sequence spans 182 residues: Dirigent protein 5 (182 aa).

Residues 1–23 (MVGQMKSFLFLFVFLVLTKTVIS) form the signal peptide. Residues Cys35 and Cys181 are joined by a disulfide bond. Residues Asn54 and Asn118 are each glycosylated (N-linked (GlcNAc...) asparagine).

Belongs to the plant dirigent protein family. In terms of assembly, homodimer. Confined to shoot meristem, vascular region of cotyledons and siliques abscission zone.

It localises to the secreted. Its subcellular location is the extracellular space. It is found in the apoplast. Dirigent proteins impart stereoselectivity on the phenoxy radical-coupling reaction, yielding optically active lignans from two molecules of coniferyl alcohol in the biosynthesis of lignans, flavonolignans, and alkaloids and thus plays a central role in plant secondary metabolism. Enantiocomplementary dirigent protein that mediates the laccase-catalyzed enantioselective oxidative phenol coupling of (E)-coniferyl alcohol to (-)-pinoresinol. This Arabidopsis thaliana (Mouse-ear cress) protein is Dirigent protein 5 (DIR5).